A 265-amino-acid chain; its full sequence is Speedy protein E13 (265 aa).

The interval 1–80 is disordered; the sequence is MGQILGKIMM…EPEKELAPEP (80 aa). Positions 66-80 are enriched in acidic residues; the sequence is DESDDEPEKELAPEP.

Belongs to the Speedy/Ringo family.

The sequence is that of Speedy protein E13 from Homo sapiens (Human).